A 68-amino-acid chain; its full sequence is Beta-defensin 1 (68 aa).

The N-terminal stretch at 1–21 (MRTSYLLLFTLCLLLSEIASG) is a signal peptide. A propeptide spanning residues 22-32 (GNFLTGLGHRS) is cleaved from the precursor. 3 cysteine pairs are disulfide-bonded: Cys37/Cys66, Cys44/Cys59, and Cys49/Cys67.

The protein belongs to the beta-defensin family. Monomer. Homodimer.

It localises to the secreted. The protein localises to the membrane. Functionally, has bactericidal activity. May act as a ligand for C-C chemokine receptor CCR6. Positively regulates the sperm motility and bactericidal activity in a CCR6-dependent manner. Binds to CCR6 and triggers Ca2+ mobilization in the sperm which is important for its motility. The sequence is that of Beta-defensin 1 (DEFB1) from Gorilla gorilla gorilla (Western lowland gorilla).